A 580-amino-acid polypeptide reads, in one-letter code: Long-chain-fatty-acid--AMP ligase FadD28 (580 aa).

Residues 421–440 are disordered; sequence SERTFGGKIVTPSPGTPEGP.

Belongs to the ATP-dependent AMP-binding enzyme family.

It catalyses the reaction holo-[mycocerosate synthase] + a long-chain fatty acid + ATP = a long-chain fatty acyl-[mycocerosate synthase] + AMP + diphosphate. The enzyme catalyses a long-chain fatty acid + ATP + H(+) = a long-chain fatty acyl-AMP + diphosphate. The catalysed reaction is holo-[mycocerosate synthase] + a long-chain fatty acyl-AMP = a long-chain fatty acyl-[mycocerosate synthase] + AMP + H(+). It functions in the pathway lipid metabolism; fatty acid biosynthesis. Involved in the biosynthesis of phthiocerol dimycocerosate (PDIM), a cell wall-associated lipid found only in pathogenic mycobacteria. Catalyzes the activation of long-chain fatty acids as acyl-adenylates (acyl-AMP), which are then transferred to the multifunctional polyketide synthase Mas for further chain extension. The sequence is that of Long-chain-fatty-acid--AMP ligase FadD28 (fadD28) from Mycobacterium bovis (strain ATCC BAA-935 / AF2122/97).